A 101-amino-acid polypeptide reads, in one-letter code: Urease subunit beta (101 aa).

Belongs to the urease beta subunit family. In terms of assembly, heterotrimer of UreA (gamma), UreB (beta) and UreC (alpha) subunits. Three heterotrimers associate to form the active enzyme.

The protein localises to the cytoplasm. The catalysed reaction is urea + 2 H2O + H(+) = hydrogencarbonate + 2 NH4(+). It functions in the pathway nitrogen metabolism; urea degradation; CO(2) and NH(3) from urea (urease route): step 1/1. The sequence is that of Urease subunit beta from Cupriavidus metallidurans (strain ATCC 43123 / DSM 2839 / NBRC 102507 / CH34) (Ralstonia metallidurans).